The following is a 112-amino-acid chain: MNGTFFNHTLMEQVAYNNTTSQDLGSLMGCCNGSQTVITNDGGSLILIPDERSLFITRVVQIAVLCVLSLTVLFGIFFLGCNLLIKSESMINFLVKDRRPSKDVGAVILGLY.

A helical transmembrane segment spans residues 59–79 (VVQIAVLCVLSLTVLFGIFFL).

Belongs to the reprimo family.

It is found in the membrane. The chain is Reprimo-like protein (rprml) from Xenopus laevis (African clawed frog).